Reading from the N-terminus, the 335-residue chain is Mitochondrial amidoxime reducing component 2 (335 aa).

The transit peptide at 1-35 directs the protein to the mitochondrion; sequence MGASSSSALARLGLPAQARPRWLGVAVLGLAAVAL. Residues lysine 59, lysine 138, and lysine 144 each participate in a glycyl lysine isopeptide (Lys-Gly) (interchain with G-Cter in ubiquitin) cross-link. Lysine 156 carries the N6-acetyllysine; alternate modification. Lysine 156 participates in a covalent cross-link: Glycyl lysine isopeptide (Lys-Gly) (interchain with G-Cter in ubiquitin); alternate. Glycyl lysine isopeptide (Lys-Gly) (interchain with G-Cter in ubiquitin) cross-links involve residues lysine 173, lysine 187, lysine 287, and lysine 294. The 147-residue stretch at 188–334 folds into the MOSC domain; sequence GRTSRKLLPT…LRVGDPVYRM (147 aa).

Component of a complex composed of cytochrome b5, NADH-cytochrome b5 reductase (CYB5R3) and MTARC2. Mo-molybdopterin serves as cofactor. Post-translationally, ubiquitinated by PRKN during mitophagy, leading to its degradation and enhancement of mitophagy. Deubiquitinated by USP30.

It is found in the mitochondrion outer membrane. It localises to the peroxisome. The catalysed reaction is N(omega)-hydroxy-L-arginine + 2 Fe(II)-[cytochrome b5] + 2 H(+) = L-arginine + 2 Fe(III)-[cytochrome b5] + H2O. Its function is as follows. Catalyzes the reduction of N-oxygenated molecules, acting as a counterpart of cytochrome P450 and flavin-containing monooxygenases in metabolic cycles. As a component of prodrug-converting system, reduces a multitude of N-hydroxylated prodrugs particularly amidoximes, leading to increased drug bioavailability. May be involved in mitochondrial N(omega)-hydroxy-L-arginine (NOHA) reduction, regulating endogenous nitric oxide levels and biosynthesis. Postulated to cleave the N-OH bond of N-hydroxylated substrates in concert with electron transfer from NADH to cytochrome b5 reductase then to cytochrome b5, the ultimate electron donor that primes the active site for substrate reduction. The chain is Mitochondrial amidoxime reducing component 2 (MTARC2) from Macaca fascicularis (Crab-eating macaque).